Consider the following 1912-residue polypeptide: Vitellogenin-1 (1912 aa).

Residues methionine 1 to serine 15 form the signal peptide. The Vitellogenin domain occupies phenylalanine 24–valine 663. Asparagine 163 carries N-linked (GlcNAc...) asparagine glycosylation. The disordered stretch occupies residues aspartate 948 to phenylalanine 972. An N-linked (GlcNAc...) asparagine glycan is attached at asparagine 991. Disordered regions lie at residues lysine 1080 to isoleucine 1329 and histidine 1351 to asparagine 1432. Composition is skewed to low complexity over residues asparagine 1092–serine 1124 and serine 1150–lysine 1235. Residue asparagine 1206 is glycosylated (N-linked (GlcNAc...) asparagine). The span at glutamate 1259–glutamine 1269 shows a compositional bias: basic and acidic residues. A compositionally biased stretch (low complexity) spans serine 1273–serine 1299. The span at tryptophan 1306–arginine 1316 shows a compositional bias: basic and acidic residues. The segment covering serine 1319–aspartate 1328 has biased composition (polar residues). Residues arginine 1357–serine 1381 show a composition bias toward low complexity. The N-linked (GlcNAc...) asparagine glycan is linked to asparagine 1375. A compositionally biased stretch (basic residues) spans serine 1397 to arginine 1409. One can recognise a VWFD domain in the interval serine 1640–serine 1818. 2 disulfide bridges follow: cysteine 1642/cysteine 1781 and cysteine 1665/cysteine 1817. Asparagine 1662, asparagine 1698, and asparagine 1703 each carry an N-linked (GlcNAc...) asparagine glycan.

Post-translationally, phosvitin, an egg yolk storage protein, is one of the most highly phosphorylated (10%) proteins in nature. Cathepsin D is responsible for intraoocytic processing of vitellogenin. In terms of processing, may contain intrachain disulfide bonds. Produced by the liver, secreted into the blood and then sequestered by receptor mediated endocytosis into growing oocytes, where it is generally cleaved, giving rise to the respective yolk components.

Precursor of the egg-yolk proteins that are sources of nutrients during early development of oviparous organisms. Its function is as follows. Phosvitin is believed to be of importance in sequestering calcium, iron and other cations for the developing embryo. In Gallus gallus (Chicken), this protein is Vitellogenin-1 (VTG1).